Here is a 721-residue protein sequence, read N- to C-terminus: 1,4-alpha-glucan branching enzyme GlgB (721 aa).

Aspartate 400 serves as the catalytic Nucleophile. Glutamate 453 serves as the catalytic Proton donor.

Belongs to the glycosyl hydrolase 13 family. GlgB subfamily. Monomer.

The catalysed reaction is Transfers a segment of a (1-&gt;4)-alpha-D-glucan chain to a primary hydroxy group in a similar glucan chain.. It functions in the pathway glycan biosynthesis; glycogen biosynthesis. Functionally, catalyzes the formation of the alpha-1,6-glucosidic linkages in glycogen by scission of a 1,4-alpha-linked oligosaccharide from growing alpha-1,4-glucan chains and the subsequent attachment of the oligosaccharide to the alpha-1,6 position. The protein is 1,4-alpha-glucan branching enzyme GlgB of Chlamydia felis (strain Fe/C-56) (Chlamydophila felis).